The chain runs to 358 residues: MQEFTWENYSYEDFFGDFSNYSYSTDLPPTLLDSAPCRSESLETNSYVVLITYILVFLLSLLGNSLVMLVILYSRSTCSVTDVYLLNLAIADLLFATTLPIWAASKVHGWTFGTPLCKVVSLVKEVNFYSGILLLACISVDRYLAIVHATRTMIQKRHLVKFICLSMWGVSLILSLPILLFRNAIFPPNSSPVCYEDMGNSTAKWRMVLRILPQTFGFILPLLVMLFCYVFTLRTLFQAHMGQKHRAMRVIFAVVLIFLLCWLPYNLVLLTDTLMRTHVIQETCERRNDIDRALDATEILGFLHSCLNPIIYAFIGQKFRYGLLKILAAHGLISKEFLAKESRPSFVASSSGNTSTTL.

The Extracellular segment spans residues 1-46 (MQEFTWENYSYEDFFGDFSNYSYSTDLPPTLLDSAPCRSESLETNS). 2 N-linked (GlcNAc...) asparagine glycosylation sites follow: Asn8 and Asn20. A helical membrane pass occupies residues 47 to 73 (YVVLITYILVFLLSLLGNSLVMLVILY). The Cytoplasmic portion of the chain corresponds to 74–82 (SRSTCSVTD). The helical transmembrane segment at 83–103 (VYLLNLAIADLLFATTLPIWA) threads the bilayer. Residues 104–118 (ASKVHGWTFGTPLCK) are Extracellular-facing. A disulfide bond links Cys117 and Cys194. A helical membrane pass occupies residues 119-140 (VVSLVKEVNFYSGILLLACISV). At 141-161 (DRYLAIVHATRTMIQKRHLVK) the chain is on the cytoplasmic side. A helical transmembrane segment spans residues 162–181 (FICLSMWGVSLILSLPILLF). Residues 182-206 (RNAIFPPNSSPVCYEDMGNSTAKWR) are Extracellular-facing. Residues 207–229 (MVLRILPQTFGFILPLLVMLFCY) traverse the membrane as a helical segment. Over 230–249 (VFTLRTLFQAHMGQKHRAMR) the chain is Cytoplasmic. The helical transmembrane segment at 250-271 (VIFAVVLIFLLCWLPYNLVLLT) threads the bilayer. The Extracellular portion of the chain corresponds to 272–292 (DTLMRTHVIQETCERRNDIDR). A helical membrane pass occupies residues 293–313 (ALDATEILGFLHSCLNPIIYA). Residues 314–358 (FIGQKFRYGLLKILAAHGLISKEFLAKESRPSFVASSSGNTSTTL) are Cytoplasmic-facing.

Belongs to the G-protein coupled receptor 1 family. In terms of assembly, interacts with IL8. Interacts with GNAI2. In terms of processing, phosphorylated upon ligand binding; which is required for desensitization. In terms of tissue distribution, expressed preferentially in neutrophils.

Its subcellular location is the cell membrane. In terms of biological role, receptor for interleukin-8 which is a powerful neutrophil chemotactic factor. Binding of IL-8 to the receptor causes activation of neutrophils. This response is mediated via a G-protein that activates a phosphatidylinositol-calcium second messenger system. Binds to IL-8 with high affinity. Also binds with high affinity to CXCL3, GRO/MGSA and NAP-2. In Oryctolagus cuniculus (Rabbit), this protein is C-X-C chemokine receptor type 2 (CXCR2).